The chain runs to 190 residues: MSGACTSYVSAEQEVVRGFSCPRPGGEAAAVFCCGFRDHKYCCDDPHSFFPYEHSYMWWLSIGALIGLSVAAVVLLAFIVTACVLCYLFISSKPHTKLDLGLSLQTAGPEEVSPDCQGVNTGMAAEVPKVSPLQQSYSCLNPQLESNEGQAVNSKRLLHHCFMATVTTSDIPGSPEEASVPNPDLCGPVP.

Helical transmembrane passes span 48–68 and 70–90; these read SFFP…LIGL and VAAV…YLFI.

Belongs to the shisa family.

The protein resides in the membrane. The protein is Protein shisa-like-2A of Homo sapiens (Human).